Reading from the N-terminus, the 119-residue chain is Large ribosomal subunit protein uL18 (119 aa).

This sequence belongs to the universal ribosomal protein uL18 family. Part of the 50S ribosomal subunit; part of the 5S rRNA/L5/L18/L25 subcomplex. Contacts the 5S and 23S rRNAs.

In terms of biological role, this is one of the proteins that bind and probably mediate the attachment of the 5S RNA into the large ribosomal subunit, where it forms part of the central protuberance. This Clostridium botulinum (strain Loch Maree / Type A3) protein is Large ribosomal subunit protein uL18.